A 287-amino-acid chain; its full sequence is Shikimate kinase 3, chloroplastic (287 aa).

Residues 1-57 (MDAGVGLRAKPGAWAGLGNPRRSSTARVPVRFAVEKFAQPLVLGSDRRSCGAKLKVS) constitute a chloroplast transit peptide. Residue 98-105 (GMMGSGKT) coordinates ATP. Mg(2+) is bound at residue Thr-105. 3 residues coordinate substrate: Asp-123, Arg-148, and Gly-170. Arg-209 contacts ATP.

This sequence belongs to the shikimate kinase family. Mg(2+) is required as a cofactor. In terms of tissue distribution, expressed in panicles.

It localises to the plastid. It is found in the chloroplast. The enzyme catalyses shikimate + ATP = 3-phosphoshikimate + ADP + H(+). It participates in metabolic intermediate biosynthesis; chorismate biosynthesis; chorismate from D-erythrose 4-phosphate and phosphoenolpyruvate: step 5/7. Catalyzes the specific phosphorylation of the 3-hydroxyl group of shikimic acid using ATP as a cosubstrate. This is Shikimate kinase 3, chloroplastic (SK3) from Oryza sativa subsp. japonica (Rice).